The following is a 285-amino-acid chain: Phosphatidylglycerol--prolipoprotein diacylglyceryl transferase (285 aa).

4 helical membrane-spanning segments follow: residues 26 to 46 (IALH…WWYV), 71 to 91 (FVVW…VLIW), 107 to 127 (WDGG…IIWF), and 133 to 153 (INIW…IGVV). Residue Arg-154 participates in a 1,2-diacyl-sn-glycero-3-phospho-(1'-sn-glycerol) binding. A run of 3 helical transmembrane segments spans residues 194 to 214 (LMEG…FKAF), 218 to 238 (GTVA…SEIF), and 256 to 276 (GFTY…YAIF).

It belongs to the Lgt family.

It localises to the cell inner membrane. The catalysed reaction is L-cysteinyl-[prolipoprotein] + a 1,2-diacyl-sn-glycero-3-phospho-(1'-sn-glycerol) = an S-1,2-diacyl-sn-glyceryl-L-cysteinyl-[prolipoprotein] + sn-glycerol 1-phosphate + H(+). The protein operates within protein modification; lipoprotein biosynthesis (diacylglyceryl transfer). Its function is as follows. Catalyzes the transfer of the diacylglyceryl group from phosphatidylglycerol to the sulfhydryl group of the N-terminal cysteine of a prolipoprotein, the first step in the formation of mature lipoproteins. This chain is Phosphatidylglycerol--prolipoprotein diacylglyceryl transferase, found in Bartonella bacilliformis (strain ATCC 35685 / KC583 / Herrer 020/F12,63).